The primary structure comprises 436 residues: Type II methyltransferase M.BsuRI (436 aa).

The 351-residue stretch at 59 to 409 (INVLSLFSGC…SPIANWAINY (351 aa)) folds into the SAM-dependent MTase C5-type domain. Residue Cys157 is part of the active site.

It belongs to the class I-like SAM-binding methyltransferase superfamily. C5-methyltransferase family. Monomer.

It carries out the reaction a 2'-deoxycytidine in DNA + S-adenosyl-L-methionine = a 5-methyl-2'-deoxycytidine in DNA + S-adenosyl-L-homocysteine + H(+). A methylase, recognizes the double-stranded sequence 5'-GGCC-3', methylates C-3 on both strands, and protects the DNA from cleavage by the BsuRI endonuclease. The polypeptide is Type II methyltransferase M.BsuRI (hsdRM) (Bacillus subtilis).